Reading from the N-terminus, the 941-residue chain is Isoleucine--tRNA ligase (941 aa).

A 'HIGH' region motif is present at residues P59–H69. An L-isoleucyl-5'-AMP-binding site is contributed by E562. A 'KMSKS' region motif is present at residues K603–S607. K606 contacts ATP. Residues C904, C907, C924, and C927 each coordinate Zn(2+).

Belongs to the class-I aminoacyl-tRNA synthetase family. IleS type 1 subfamily. As to quaternary structure, monomer. The cofactor is Zn(2+).

It localises to the cytoplasm. It catalyses the reaction tRNA(Ile) + L-isoleucine + ATP = L-isoleucyl-tRNA(Ile) + AMP + diphosphate. In terms of biological role, catalyzes the attachment of isoleucine to tRNA(Ile). As IleRS can inadvertently accommodate and process structurally similar amino acids such as valine, to avoid such errors it has two additional distinct tRNA(Ile)-dependent editing activities. One activity is designated as 'pretransfer' editing and involves the hydrolysis of activated Val-AMP. The other activity is designated 'posttransfer' editing and involves deacylation of mischarged Val-tRNA(Ile). This chain is Isoleucine--tRNA ligase, found in Haemophilus influenzae (strain PittGG).